The following is a 424-amino-acid chain: MDKLVIRGGRRLIGSVTASGSKNSSLPVIAATLLSGNGTFTLHRIPDLQDISTFTQLINHLGAQTSFSDNTLTVSTGNVESLLAPYELVKKMRASIYVLGPLLARFGEATVSLPGGCAFGPRPIDLHLMAMEKLGAEITIETGFITAKARNGKLQGARIDFPVSSVGATGNALMAAVLAEGKTIITNAAAEPEIEALCRFLASMGARIEGTGTTELIIEGVTSLSAVEFTNVFDRIEAGTLLAAAAITGGTVTVDGVEPEQLKSVLKKFAHAGCTISQTPGSITLASPEKLIPTDITAKPYPSFPTDMQAQWTALMTQAEGTSRITDKVYHERFNHIPELNRLGAHIEIRKNQAIVEGPRRLSGTKVMSTDLRASACLVLAGLVADGVTEVLRVYHLDRGYEQIEMKLNSLGADITREKYKEFS.

Position 22-23 (22-23 (KN)) interacts with phosphoenolpyruvate. Arg-93 is a binding site for UDP-N-acetyl-alpha-D-glucosamine. Cys-117 functions as the Proton donor in the catalytic mechanism. At Cys-117 the chain carries 2-(S-cysteinyl)pyruvic acid O-phosphothioketal. UDP-N-acetyl-alpha-D-glucosamine contacts are provided by residues 122 to 126 (RPIDL), Asp-307, and Val-329.

It belongs to the EPSP synthase family. MurA subfamily.

The protein localises to the cytoplasm. The enzyme catalyses phosphoenolpyruvate + UDP-N-acetyl-alpha-D-glucosamine = UDP-N-acetyl-3-O-(1-carboxyvinyl)-alpha-D-glucosamine + phosphate. Its pathway is cell wall biogenesis; peptidoglycan biosynthesis. Its function is as follows. Cell wall formation. Adds enolpyruvyl to UDP-N-acetylglucosamine. This chain is UDP-N-acetylglucosamine 1-carboxyvinyltransferase, found in Chlorobium limicola (strain DSM 245 / NBRC 103803 / 6330).